The sequence spans 208 residues: Probable GTP-binding protein EngB (208 aa).

The EngB-type G domain maps to Leu-23–Thr-205. Residues Gly-31–Ser-38, Gly-57–Leu-61, Asp-84–Gly-87, Thr-154–Asp-157, and Phe-182–Ala-184 each bind GTP. 2 residues coordinate Mg(2+): Ser-38 and Thr-59.

This sequence belongs to the TRAFAC class TrmE-Era-EngA-EngB-Septin-like GTPase superfamily. EngB GTPase family. The cofactor is Mg(2+).

Its function is as follows. Necessary for normal cell division and for the maintenance of normal septation. This is Probable GTP-binding protein EngB from Helicobacter pylori (strain G27).